Reading from the N-terminus, the 473-residue chain is UDP-glycosyltransferase 91D2 (473 aa).

The active-site Proton acceptor is H26. Position 26 (H26) interacts with an anthocyanidin. D121 acts as the Charge relay in catalysis. 5 residues coordinate UDP-alpha-D-glucose: A344, Q346, H361, S366, and E369. G384 provides a ligand contact to an anthocyanidin. UDP-alpha-D-glucose contacts are provided by D385 and Q386.

The protein belongs to the UDP-glycosyltransferase family.

It catalyses the reaction steviolmonoside + UDP-alpha-D-glucose = steviolbioside + UDP + H(+). It carries out the reaction rubusoside + UDP-alpha-D-glucose = stevioside + UDP + H(+). The enzyme catalyses stevioside + UDP-alpha-D-glucose = rebaudioside E + UDP + H(+). The catalysed reaction is rebaudioside A + UDP-alpha-D-glucose = rebaudioside D + UDP + H(+). Involved in the biosynthesis of steviol glycosides in leaves. Converts the mono-glycoside steviolmonoside to the bi-glycoside steviolbioside. Converts the bi-glycoside rubusoside to the tri-glycoside stevioside. Converts the tri-glycoside stevioside to the tetra-glycoside rebaudioside E. Converts the tetra-glycoside rebaudioside A to the penta-glycoside rebaudioside E. This chain is UDP-glycosyltransferase 91D2, found in Stevia rebaudiana (Stevia).